The primary structure comprises 298 residues: Multifunctional dioxygenase ausE (298 aa).

Substrate contacts are provided by Arg72 and Gln127. Fe cation is bound by residues His130 and Asp132. Position 167 (Thr167) interacts with substrate. His214 contacts Fe cation. Residue Arg226 participates in substrate binding.

The protein belongs to the PhyH family. Homodimer. Fe cation is required as a cofactor.

It catalyses the reaction preaustinoid A1 + 2-oxoglutarate + O2 = preaustinoid A2 + succinate + CO2 + H2O. The enzyme catalyses preaustinoid A2 + 2-oxoglutarate + O2 = preaustinoid A3 + succinate + CO2 + H2O. It carries out the reaction berkeleyone A + 2-oxoglutarate + O2 = preaustinoid A + succinate + CO2 + H2O. It functions in the pathway secondary metabolite biosynthesis; terpenoid biosynthesis. In terms of biological role, multifunctional dioxygenase; part of the gene cluster B that mediates the biosynthesis of austinol and dehydroaustinol, two fungal meroterpenoids. The first step of the pathway is the synthesis of 3,5-dimethylorsellinic acid by the polyketide synthase ausA. 3,5-dimethylorsellinic acid is then prenylated by the polyprenyl transferase ausN. Further epoxidation by the FAD-dependent monooxygenase ausM and cyclization by the probable terpene cyclase ausL lead to the formation of protoaustinoid A. Protoaustinoid A is then oxidized to spiro-lactone preaustinoid A3 by the combined action of the FAD-binding monooxygenases ausB and ausC, and the dioxygenase ausE. Acid-catalyzed keto-rearrangement and ring contraction of the tetraketide portion of preaustinoid A3 by ausJ lead to the formation of preaustinoid A4. The aldo-keto reductase ausK, with the help of ausH, is involved in the next step by transforming preaustinoid A4 into isoaustinone which is in turn hydroxylated by the P450 monooxygenase ausI to form austinolide. Finally, the cytochrome P450 monooxygenase ausG modifies austinolide to austinol. Austinol can be further modified to dehydroaustinol which forms a diffusible complex with diorcinol that initiates conidiation. Due to genetic rearrangements of the clusters and the subsequent loss of some enzymes, the end products of the Emericella nidulans austinoid biosynthesis clusters are austinol and dehydroaustinol, even if additional enzymes, such as the O-acetyltransferase ausQ and the cytochrome P450 monooxygenase ausR are still functional. The sequence is that of Multifunctional dioxygenase ausE from Emericella nidulans (strain FGSC A4 / ATCC 38163 / CBS 112.46 / NRRL 194 / M139) (Aspergillus nidulans).